The sequence spans 144 residues: Ribosome maturation factor RimP (144 aa).

The protein belongs to the RimP family.

The protein localises to the cytoplasm. Required for maturation of 30S ribosomal subunits. The polypeptide is Ribosome maturation factor RimP (Azoarcus sp. (strain BH72)).